The primary structure comprises 295 residues: Indole-3-glycerol phosphate synthase (295 aa).

Belongs to the TrpC family.

The enzyme catalyses 1-(2-carboxyphenylamino)-1-deoxy-D-ribulose 5-phosphate + H(+) = (1S,2R)-1-C-(indol-3-yl)glycerol 3-phosphate + CO2 + H2O. It participates in amino-acid biosynthesis; L-tryptophan biosynthesis; L-tryptophan from chorismate: step 4/5. The protein is Indole-3-glycerol phosphate synthase of Prochlorococcus marinus (strain MIT 9301).